The sequence spans 429 residues: tRNA(Ile2) 2-agmatinylcytidine synthetase TiaS (429 aa).

The segment at 403 to 429 is disordered; the sequence is KPPERPLHPSKSLEPPSTPIHSDTISL.

Belongs to the TiaS family.

The protein resides in the cytoplasm. It carries out the reaction cytidine(34) in tRNA(Ile2) + agmatine + ATP + H2O = 2-agmatinylcytidine(34) in tRNA(Ile2) + AMP + 2 phosphate + 2 H(+). In terms of biological role, ATP-dependent agmatine transferase that catalyzes the formation of 2-agmatinylcytidine (agm2C) at the wobble position (C34) of tRNA(Ile2), converting the codon specificity from AUG to AUA. This chain is tRNA(Ile2) 2-agmatinylcytidine synthetase TiaS, found in Hyperthermus butylicus (strain DSM 5456 / JCM 9403 / PLM1-5).